An 818-amino-acid polypeptide reads, in one-letter code: LPS-assembly protein LptD (818 aa).

The N-terminal stretch at 1–33 (MVNETMKHQFKFNPLATAIFTLLCSGSIQSSYA) is a signal peptide.

The protein belongs to the LptD family. Component of the lipopolysaccharide transport and assembly complex. Interacts with LptE and LptA.

It is found in the cell outer membrane. Functionally, together with LptE, is involved in the assembly of lipopolysaccharide (LPS) at the surface of the outer membrane. This Acinetobacter baumannii (strain ATCC 19606 / DSM 30007 / JCM 6841 / CCUG 19606 / CIP 70.34 / NBRC 109757 / NCIMB 12457 / NCTC 12156 / 81) protein is LPS-assembly protein LptD.